Reading from the N-terminus, the 338-residue chain is Photosystem II assembly lipoprotein Ycf48 (338 aa).

The signal sequence occupies residues 1-23 (MKRLFSNVINLTLVLIVGVALSG). Residue Cys24 is the site of N-palmitoyl cysteine attachment. Cys24 carries S-diacylglycerol cysteine lipidation.

It belongs to the Ycf48 family. In terms of assembly, part of early PSII assembly complexes which includes D1 (psbA) and PsbI; not found in mature PSII. Binds to the lumenal side of PSII complexes. Interacts with YidC.

It is found in the cellular thylakoid membrane. Functionally, a factor required for optimal assembly of photosystem II (PSII), acting in the early stages of PSII assembly. Also plays a role in replacement of photodamaged D1 (psbA). Assists YidC in synthesis of chlorophyll-binding proteins. The protein is Photosystem II assembly lipoprotein Ycf48 of Prochlorococcus marinus (strain NATL2A).